The following is a 378-amino-acid chain: Acetylornithine deacetylase (378 aa).

H76 lines the Zn(2+) pocket. The active site involves D78. D108 is a binding site for Zn(2+). The active site involves E140. E141, E165, and H351 together coordinate Zn(2+).

It belongs to the peptidase M20A family. ArgE subfamily. In terms of assembly, homodimer. Zn(2+) is required as a cofactor. It depends on Co(2+) as a cofactor. Requires glutathione as cofactor.

Its subcellular location is the cytoplasm. The enzyme catalyses N(2)-acetyl-L-ornithine + H2O = L-ornithine + acetate. Its pathway is amino-acid biosynthesis; L-arginine biosynthesis; L-ornithine from N(2)-acetyl-L-ornithine (linear): step 1/1. Functionally, catalyzes the hydrolysis of the amide bond of N(2)-acetylated L-amino acids. Cleaves the acetyl group from N-acetyl-L-ornithine to form L-ornithine, an intermediate in L-arginine biosynthesis pathway, and a branchpoint in the synthesis of polyamines. This Vibrio campbellii (strain ATCC BAA-1116) protein is Acetylornithine deacetylase.